Here is a 244-residue protein sequence, read N- to C-terminus: tRNA (guanine-N(7)-)-methyltransferase (244 aa).

Residues E75, E100, D127, and D150 each contribute to the S-adenosyl-L-methionine site. Residue D150 is part of the active site. Residues K154, D186, and 223 to 226 (TRFE) each bind substrate.

It belongs to the class I-like SAM-binding methyltransferase superfamily. TrmB family.

The enzyme catalyses guanosine(46) in tRNA + S-adenosyl-L-methionine = N(7)-methylguanosine(46) in tRNA + S-adenosyl-L-homocysteine. The protein operates within tRNA modification; N(7)-methylguanine-tRNA biosynthesis. Functionally, catalyzes the formation of N(7)-methylguanine at position 46 (m7G46) in tRNA. This chain is tRNA (guanine-N(7)-)-methyltransferase, found in Xylella fastidiosa (strain M12).